We begin with the raw amino-acid sequence, 61 residues long: Mu-diguetoxin-Dc1c (61 aa).

Cystine bridges form between C12/C25, C19/C39, and C24/C53.

The protein belongs to the neurotoxin 26 (DTX) family. As to expression, expressed by the venom gland.

Its subcellular location is the secreted. Acts by delaying the inactivation of presynaptic voltage-sensitive sodium channels (Nav). Acts against insects and causes a progressive spastic paralysis. The polypeptide is Mu-diguetoxin-Dc1c (Diguetia canities (Desert bush spider)).